The chain runs to 163 residues: Large ribosomal subunit protein uL13m (163 aa).

Position 2 is an N-acetylserine (serine 2). The propeptide occupies 2–4 (SQK).

Belongs to the universal ribosomal protein uL13 family. In terms of assembly, component of the mitochondrial large ribosomal subunit (mt-LSU). Mature yeast 74S mitochondrial ribosomes consist of a small (37S) and a large (54S) subunit. The 37S small subunit contains a 15S ribosomal RNA (15S mt-rRNA) and 34 different proteins. The 54S large subunit contains a 21S rRNA (21S mt-rRNA) and 46 different proteins.

The protein resides in the mitochondrion. Functionally, component of the mitochondrial ribosome (mitoribosome), a dedicated translation machinery responsible for the synthesis of mitochondrial genome-encoded proteins, including at least some of the essential transmembrane subunits of the mitochondrial respiratory chain. The mitoribosomes are attached to the mitochondrial inner membrane and translation products are cotranslationally integrated into the membrane. This is Large ribosomal subunit protein uL13m (MRPL23) from Saccharomyces cerevisiae (strain ATCC 204508 / S288c) (Baker's yeast).